The sequence spans 471 residues: UDP-N-acetylmuramoylalanine--D-glutamate ligase (471 aa).

122-128 (GSNAKST) is an ATP binding site.

The protein belongs to the MurCDEF family.

Its subcellular location is the cytoplasm. The catalysed reaction is UDP-N-acetyl-alpha-D-muramoyl-L-alanine + D-glutamate + ATP = UDP-N-acetyl-alpha-D-muramoyl-L-alanyl-D-glutamate + ADP + phosphate + H(+). It participates in cell wall biogenesis; peptidoglycan biosynthesis. Cell wall formation. Catalyzes the addition of glutamate to the nucleotide precursor UDP-N-acetylmuramoyl-L-alanine (UMA). The chain is UDP-N-acetylmuramoylalanine--D-glutamate ligase from Psychrobacter cryohalolentis (strain ATCC BAA-1226 / DSM 17306 / VKM B-2378 / K5).